The sequence spans 315 residues: 4-hydroxy-3-methylbut-2-enyl diphosphate reductase (315 aa).

[4Fe-4S] cluster is bound at residue cysteine 12. (2E)-4-hydroxy-3-methylbut-2-enyl diphosphate-binding residues include histidine 41 and histidine 74. Residues histidine 41 and histidine 74 each contribute to the dimethylallyl diphosphate site. Isopentenyl diphosphate is bound by residues histidine 41 and histidine 74. A [4Fe-4S] cluster-binding site is contributed by cysteine 96. Histidine 124 lines the (2E)-4-hydroxy-3-methylbut-2-enyl diphosphate pocket. Position 124 (histidine 124) interacts with dimethylallyl diphosphate. Histidine 124 serves as a coordination point for isopentenyl diphosphate. Glutamate 126 (proton donor) is an active-site residue. Threonine 167 contacts (2E)-4-hydroxy-3-methylbut-2-enyl diphosphate. Cysteine 197 lines the [4Fe-4S] cluster pocket. 4 residues coordinate (2E)-4-hydroxy-3-methylbut-2-enyl diphosphate: serine 225, serine 226, asparagine 227, and serine 269. Positions 225, 226, 227, and 269 each coordinate dimethylallyl diphosphate. Isopentenyl diphosphate-binding residues include serine 225, serine 226, asparagine 227, and serine 269.

This sequence belongs to the IspH family. As to quaternary structure, homodimer. Requires [4Fe-4S] cluster as cofactor.

The catalysed reaction is isopentenyl diphosphate + 2 oxidized [2Fe-2S]-[ferredoxin] + H2O = (2E)-4-hydroxy-3-methylbut-2-enyl diphosphate + 2 reduced [2Fe-2S]-[ferredoxin] + 2 H(+). It carries out the reaction dimethylallyl diphosphate + 2 oxidized [2Fe-2S]-[ferredoxin] + H2O = (2E)-4-hydroxy-3-methylbut-2-enyl diphosphate + 2 reduced [2Fe-2S]-[ferredoxin] + 2 H(+). Its pathway is isoprenoid biosynthesis; dimethylallyl diphosphate biosynthesis; dimethylallyl diphosphate from (2E)-4-hydroxy-3-methylbutenyl diphosphate: step 1/1. It participates in isoprenoid biosynthesis; isopentenyl diphosphate biosynthesis via DXP pathway; isopentenyl diphosphate from 1-deoxy-D-xylulose 5-phosphate: step 6/6. Catalyzes the conversion of 1-hydroxy-2-methyl-2-(E)-butenyl 4-diphosphate (HMBPP) into a mixture of isopentenyl diphosphate (IPP) and dimethylallyl diphosphate (DMAPP). Acts in the terminal step of the DOXP/MEP pathway for isoprenoid precursor biosynthesis. The protein is 4-hydroxy-3-methylbut-2-enyl diphosphate reductase of Wigglesworthia glossinidia brevipalpis.